The primary structure comprises 992 residues: Presequence protease, mitochondrial (992 aa).

The transit peptide at 1 to 30 directs the protein to the mitochondrion; the sequence is MNYAKLSIAFSKKTIKTHNCRLFQRWLHVG. H91 lines the Zn(2+) pocket. E94 (proton acceptor) is an active-site residue. H95 provides a ligand contact to Zn(2+). E167 is an active-site residue. E192 contacts Zn(2+).

Belongs to the peptidase M16 family. PreP subfamily. In terms of assembly, monomer and homodimer; homodimerization is induced by binding of the substrate. The cofactor is Zn(2+).

The protein resides in the mitochondrion intermembrane space. It localises to the mitochondrion matrix. In terms of biological role, degrades mitochondrial transit peptides after their cleavage in the intermembrane space or in the matrix, and presequence peptides; clearance of these peptides is required to keep the presequence processing machinery running. Preferentially cleaves the N-terminal side of paired basic amino acid residues. Also degrades other unstructured peptides. May function as an ATP-dependent peptidase as opposed to a metalloendopeptidase. In Schizosaccharomyces pombe (strain 972 / ATCC 24843) (Fission yeast), this protein is Presequence protease, mitochondrial (cym1).